Consider the following 590-residue polypeptide: Aspartate--tRNA(Asp/Asn) ligase (590 aa).

Residue E176 participates in L-aspartate binding. Residues 200 to 203 (QLFK) form an aspartate region. L-aspartate-binding residues include R222 and H451. ATP is bound at residue 222-224 (RDE). E485 contributes to the ATP binding site. R492 lines the L-aspartate pocket. 537–540 (GIDR) contacts ATP.

It belongs to the class-II aminoacyl-tRNA synthetase family. Type 1 subfamily. In terms of assembly, homodimer.

It is found in the cytoplasm. It catalyses the reaction tRNA(Asx) + L-aspartate + ATP = L-aspartyl-tRNA(Asx) + AMP + diphosphate. Aspartyl-tRNA synthetase with relaxed tRNA specificity since it is able to aspartylate not only its cognate tRNA(Asp) but also tRNA(Asn). Reaction proceeds in two steps: L-aspartate is first activated by ATP to form Asp-AMP and then transferred to the acceptor end of tRNA(Asp/Asn). The chain is Aspartate--tRNA(Asp/Asn) ligase from Ehrlichia ruminantium (strain Welgevonden).